We begin with the raw amino-acid sequence, 332 residues long: uncharacterized protein (332 aa).

A signal peptide spans 1–26; sequence MSSLGKLLKLTLLGILLSFSCKFVFG.

Its subcellular location is the endoplasmic reticulum. This is an uncharacterized protein from Schizosaccharomyces pombe (strain 972 / ATCC 24843) (Fission yeast).